We begin with the raw amino-acid sequence, 1422 residues long: DNA-directed RNA polymerase subunit beta (1422 aa).

Residues 1392-1422 (QAAREAAERDLGGGPLGAPRGAVASGEKSSA) form a disordered region.

The protein belongs to the RNA polymerase beta chain family. As to quaternary structure, the RNAP catalytic core consists of 2 alpha, 1 beta, 1 beta' and 1 omega subunit. When a sigma factor is associated with the core the holoenzyme is formed, which can initiate transcription.

It catalyses the reaction RNA(n) + a ribonucleoside 5'-triphosphate = RNA(n+1) + diphosphate. In terms of biological role, DNA-dependent RNA polymerase catalyzes the transcription of DNA into RNA using the four ribonucleoside triphosphates as substrates. The protein is DNA-directed RNA polymerase subunit beta of Anaeromyxobacter dehalogenans (strain 2CP-1 / ATCC BAA-258).